A 332-amino-acid chain; its full sequence is Fructose-1,6-bisphosphatase class 1 (332 aa).

Mg(2+)-binding residues include Glu89, Asp110, Leu112, and Asp113. Residues 113-116 (DGSS), Asn206, Tyr239, 257-259 (YLY), and Lys269 contribute to the substrate site. Glu275 serves as a coordination point for Mg(2+).

This sequence belongs to the FBPase class 1 family. As to quaternary structure, homotetramer. It depends on Mg(2+) as a cofactor.

The protein localises to the cytoplasm. It carries out the reaction beta-D-fructose 1,6-bisphosphate + H2O = beta-D-fructose 6-phosphate + phosphate. It participates in carbohydrate biosynthesis; gluconeogenesis. This chain is Fructose-1,6-bisphosphatase class 1, found in Salmonella arizonae (strain ATCC BAA-731 / CDC346-86 / RSK2980).